The primary structure comprises 439 residues: Leukocyte immunoglobulin-like receptor subfamily A member 3 (439 aa).

The signal sequence occupies residues 1–23 (MTPILTVLICLGLSLDPRTHVQA). Ig-like C2-type domains follow at residues 27 to 108 (PKPT…AGLS), 119 to 224 (TGAY…GVSK), 226 to 315 (PSLS…DPLD), and 326 to 415 (PFLS…SDPL). Cysteines 49 and 98 form a disulfide. A glycan (N-linked (GlcNAc...) asparagine) is linked at Asn-140. 3 disulfides stabilise this stretch: Cys-145–Cys-197, Cys-157–Cys-167, and Cys-246–Cys-297. Asn-281, Asn-302, and Asn-341 each carry an N-linked (GlcNAc...) asparagine glycan. Cys-346 and Cys-397 form a disulfide bridge. Residue Asn-431 is glycosylated (N-linked (GlcNAc...) asparagine).

Post-translationally, N-glycosylation is required for ligand binding. As to expression, detected in B-cells, and at lower levels in natural killer (NK) cells. Detected in peripheral blood monocytes and lung.

The protein localises to the secreted. Its function is as follows. Acts as a soluble receptor for class I MHC antigens. Binds both classical and non-classical HLA class I molecules but with reduced affinities compared to LILRB1 or LILRB2. Binds with high affinity to the surface of monocytes, leading to abolish LPS-induced TNF-alpha production by monocytes. The chain is Leukocyte immunoglobulin-like receptor subfamily A member 3 (LILRA3) from Homo sapiens (Human).